A 97-amino-acid chain; its full sequence is Co-chaperonin GroES (97 aa).

It belongs to the GroES chaperonin family. In terms of assembly, heptamer of 7 subunits arranged in a ring. Interacts with the chaperonin GroEL.

It is found in the cytoplasm. Its function is as follows. Together with the chaperonin GroEL, plays an essential role in assisting protein folding. The GroEL-GroES system forms a nano-cage that allows encapsulation of the non-native substrate proteins and provides a physical environment optimized to promote and accelerate protein folding. GroES binds to the apical surface of the GroEL ring, thereby capping the opening of the GroEL channel. This chain is Co-chaperonin GroES, found in Buchnera aphidicola subsp. Thelaxes suberi.